Reading from the N-terminus, the 324-residue chain is Protoheme IX farnesyltransferase (324 aa).

The next 9 membrane-spanning stretches (helical) occupy residues 31 to 51, 53 to 73, 104 to 124, 125 to 145, 153 to 173, 181 to 201, 222 to 242, 243 to 263, and 285 to 305; these read LIVL…RGEV, PVLA…ANTI, LVFA…CANL, LSAC…THWL, IVIG…AVTG, VLFA…AMLI, TAWQ…LLVY, PLHA…VVFI, and FSIL…LPLT.

Belongs to the UbiA prenyltransferase family. Protoheme IX farnesyltransferase subfamily.

The protein localises to the cell inner membrane. It carries out the reaction heme b + (2E,6E)-farnesyl diphosphate + H2O = Fe(II)-heme o + diphosphate. The protein operates within porphyrin-containing compound metabolism; heme O biosynthesis; heme O from protoheme: step 1/1. Converts heme B (protoheme IX) to heme O by substitution of the vinyl group on carbon 2 of heme B porphyrin ring with a hydroxyethyl farnesyl side group. This is Protoheme IX farnesyltransferase from Cyanothece sp. (strain PCC 7425 / ATCC 29141).